The following is a 447-amino-acid chain: GTPase Der (447 aa).

EngA-type G domains follow at residues 3 to 167 and 180 to 353; these read PVIA…ALPE and IRLA…KSAN. GTP contacts are provided by residues 9-16, 56-60, 119-122, 186-193, 233-237, and 298-301; these read GRPNVGKS, DTGGF, NKAE, DTAGL, and NKWD. The 85-residue stretch at 354-438 folds into the KH-like domain; it reads RKMPTPVLTR…PLRIEMKTSS (85 aa).

This sequence belongs to the TRAFAC class TrmE-Era-EngA-EngB-Septin-like GTPase superfamily. EngA (Der) GTPase family. As to quaternary structure, associates with the 50S ribosomal subunit.

GTPase that plays an essential role in the late steps of ribosome biogenesis. This chain is GTPase Der, found in Acidovorax sp. (strain JS42).